The sequence spans 422 residues: 5-hydroxytryptamine receptor 1A (422 aa).

The disordered stretch occupies residues 1–23 (MDVLSPGQGNNTTSPPAPFETGG). Residues 1–38 (MDVLSPGQGNNTTSPPAPFETGGNTTGISDVTFSYQVI) lie on the Extracellular side of the membrane. N-linked (GlcNAc...) asparagine glycans are attached at residues N10, N11, and N24. Residues 39 to 59 (TSLLLGTLIFCAVLGNACVVA) traverse the membrane as a helical segment. Over 60–73 (AIALERSLQNVANY) the chain is Cytoplasmic. A helical membrane pass occupies residues 74 to 98 (LIGSLAVTDLMVSVLVLPMAALYQV). Over 99–107 (LNKWTLGQV) the chain is Extracellular. Residues 108 to 132 (TCDLFIALDVLCCTSSILHLCAIAL) form a helical membrane-spanning segment. A disulfide bridge connects residues C109 and C187. Serotonin contacts are provided by D116 and C120. Residues 133 to 135 (DRY) carry the DRY motif; important for ligand-induced conformation changes motif. At 133-152 (DRYWAITDPIDYVNKRTPRR) the chain is on the cytoplasmic side. A helical transmembrane segment spans residues 153-174 (AAALISLTWLIGFLISIPPMLG). Residues 175–193 (WRTPEDRSDPDACTISKDH) lie on the Extracellular side of the membrane. The chain crosses the membrane as a helical span at residues 194-216 (GYTIYSTFGAFYIPLLLMLVLYG). The Cytoplasmic portion of the chain corresponds to 217-346 (RIFRAARFRI…LARERKTVKT (130 aa)). The interval 235–263 (KTGADTHHGASPAPQPKKSVNGESGSRNW) is disordered. 1D-myo-inositol 4-phosphate contacts are provided by T314, K345, T346, and G352. A helical transmembrane segment spans residues 347–370 (LGIIMGTFILCWLPFFIVALVLPF). Residues 371-378 (CESSCHMP) are Extracellular-facing. Residues 379–403 (TLLGAIINWLGYSNSLLNPVIYAYF) traverse the membrane as a helical segment. An NPxxY motif; important for ligand-induced conformation changes and signaling motif is present at residues 396–400 (NPVIY). 1D-myo-inositol 4-phosphate is bound by residues F403, N404, and K405. The Cytoplasmic portion of the chain corresponds to 404–422 (NKDFQNAFKKIIKCKFCRQ).

This sequence belongs to the G-protein coupled receptor 1 family. 5-hydroxytryptamine receptor subfamily. HTR1A sub-subfamily. In terms of assembly, heterodimer; heterodimerizes with GPER1. Interacts with YIF1B. Interacts with GPR39 and GALR1.

The protein resides in the cell membrane. The protein localises to the cell projection. It localises to the dendrite. With respect to regulation, G-protein coupled receptor activity is regulated by lipids: phosphatidylinositol 4-phosphate increases HTR1A-mediated activity. Its function is as follows. G-protein coupled receptor for 5-hydroxytryptamine (serotonin). Also functions as a receptor for various drugs and psychoactive substances. Ligand binding causes a conformation change that triggers signaling via guanine nucleotide-binding proteins (G proteins) and modulates the activity of downstream effectors, such as adenylate cyclase. HTR1A is coupled to G(i)/G(o) G alpha proteins and mediates inhibitory neurotransmission: signaling inhibits adenylate cyclase activity and activates a phosphatidylinositol-calcium second messenger system that regulates the release of Ca(2+) ions from intracellular stores. Beta-arrestin family members regulate signaling by mediating both receptor desensitization and resensitization processes. The sequence is that of 5-hydroxytryptamine receptor 1A (HTR1A) from Pongo pygmaeus (Bornean orangutan).